A 217-amino-acid chain; its full sequence is 3-demethoxyubiquinol 3-hydroxylase (217 aa).

Fe cation-binding residues include glutamate 66, glutamate 96, histidine 99, glutamate 148, glutamate 180, and histidine 183.

This sequence belongs to the COQ7 family. Requires Fe cation as cofactor.

The protein localises to the cell membrane. The enzyme catalyses a 5-methoxy-2-methyl-3-(all-trans-polyprenyl)benzene-1,4-diol + AH2 + O2 = a 3-demethylubiquinol + A + H2O. It functions in the pathway cofactor biosynthesis; ubiquinone biosynthesis. Functionally, catalyzes the hydroxylation of 2-nonaprenyl-3-methyl-6-methoxy-1,4-benzoquinol during ubiquinone biosynthesis. This is 3-demethoxyubiquinol 3-hydroxylase from Xanthomonas axonopodis pv. citri (strain 306).